The chain runs to 519 residues: Apolipoprotein N-acyltransferase (519 aa).

6 helical membrane-spanning segments follow: residues 6–26, 47–67, 83–103, 126–146, 174–194, and 206–226; these read APLG…IWIF, LTAI…ITGV, IAAF…FVWL, LFIL…SHSI, LLSA…IDFL, and WHYF…GWLL. A CN hydrolase domain is found at 244–482; it reads IQGNIPNQIK…YEIHAAPIYR (239 aa). E285 serves as the catalytic Proton acceptor. The active site involves K343. The Nucleophile role is filled by C394. Residues 496-516 form a helical membrane-spanning segment; it reads VVFLLLVVSAIAWLYQIVFPL.

Belongs to the CN hydrolase family. Apolipoprotein N-acyltransferase subfamily.

It localises to the cell inner membrane. The catalysed reaction is N-terminal S-1,2-diacyl-sn-glyceryl-L-cysteinyl-[lipoprotein] + a glycerophospholipid = N-acyl-S-1,2-diacyl-sn-glyceryl-L-cysteinyl-[lipoprotein] + a 2-acyl-sn-glycero-3-phospholipid + H(+). Its pathway is protein modification; lipoprotein biosynthesis (N-acyl transfer). Functionally, catalyzes the phospholipid dependent N-acylation of the N-terminal cysteine of apolipoprotein, the last step in lipoprotein maturation. This is Apolipoprotein N-acyltransferase from Synechocystis sp. (strain ATCC 27184 / PCC 6803 / Kazusa).